The following is a 470-amino-acid chain: uncharacterized protein (470 aa).

One can recognise an HTH gntR-type domain in the interval 1 to 69; the sequence is MTRYQHLATL…PRSGYFVAQR (69 aa). An N6-(pyridoxal phosphate)lysine modification is found at Lys313.

In the C-terminal section; belongs to the class-I pyridoxal-phosphate-dependent aminotransferase family.

This is an uncharacterized protein from Escherichia coli (strain K12).